Consider the following 549-residue polypeptide: MSKRGADHQLTKDQDDSDDDRHGPVEVPKEASADVMATRKIAKPKSRKRPTSGVSSPGIFANLAAKPVSLPASTTQFTFGKPAVTANNDSDIHLKKRGLNKSFIDAVIKSVDNNPFGNLSPLFDEYRQHFSSIEKKPAEEQPTSNAVVSEVNPQQQKSQDSSSFVTEKPASSEKEDKEKPLVPPGAPRFGFSAPALGSSFQFNSSAFTPKGSFGEKSATEAEAKEKETSSNQTATGTAATTTNQFSFNTAANPFAFAKKENEESKPLTPVFSFSTTMASADASKETKQTHETKDSKSEESKPSNNEKSENAVEPAKGNTMSFSWTPDKPIKFDTPEKKFTFTNPLSSKKLPASSDVKPPSAAAVGFSFGTTTNPFSFAAPKSSFPTSSTPASVGAEKSEETSNGNKSEQEEKENGNDETRSNDSLVSGKGKGEENEDSVFETRAKIYRFDATSKSYSDIGIGPLKINVDRDTGSARILARVEGSGKLLLNVRLCQDFEYSLAGKKDVKVPAASTDGKSIEMYLIRVKEPSTAEKLLAELNEKKVSKSEN.

The span at 1 to 32 (MSKRGADHQLTKDQDDSDDDRHGPVEVPKEAS) shows a compositional bias: basic and acidic residues. Disordered stretches follow at residues 1–57 (MSKR…VSSP), 133–193 (IEKK…GFSA), and 207–438 (FTPK…NEDS). Ser17 bears the Phosphoserine mark. Positions 40–50 (KIAKPKSRKRP) are enriched in basic residues. Polar residues predominate over residues 141–165 (QPTSNAVVSEVNPQQQKSQDSSSFV). 2 stretches are compositionally biased toward basic and acidic residues: residues 170–180 (ASSEKEDKEKP) and 217–228 (SATEAEAKEKET). The span at 229–244 (SSNQTATGTAATTTNQ) shows a compositional bias: low complexity. 2 stretches are compositionally biased toward basic and acidic residues: residues 282 to 310 (ASKETKQTHETKDSKSEESKPSNNEKSEN) and 328 to 339 (KPIKFDTPEKKF). Ser347 carries the phosphoserine modification. Over residues 407–421 (SEQEEKENGNDETRS) the composition is skewed to basic and acidic residues. A RanBD1 domain is found at 416–549 (NDETRSNDSL…NEKKVSKSEN (134 aa)).

Its subcellular location is the nucleus. The protein localises to the nuclear pore complex. Functions as a component of the nuclear pore complex (NPC). NPC components, collectively referred to as nucleoporins (NUPs), can play the role of both NPC structural components and of docking or interaction partners for transiently associated nuclear transport factors. Active directional transport is assured by both, a Phe-Gly (FG) repeat affinity gradient for these transport factors across the NPC and a transport cofactor concentration gradient across the nuclear envelope. May play a role in mitotic spindle formation and/or function. The polypeptide is Nucleoporin nup61 (nup61) (Schizosaccharomyces pombe (strain 972 / ATCC 24843) (Fission yeast)).